The following is a 230-amino-acid chain: V-type proton ATPase subunit E (230 aa).

This sequence belongs to the V-ATPase E subunit family. As to quaternary structure, V-ATPase is a heteromultimeric enzyme composed of a peripheral catalytic V1 complex (components A to H) attached to an integral membrane V0 proton pore complex (components: a, c, c', c'', d, e, f and VOA1).

Its subcellular location is the vacuole membrane. Its function is as follows. Subunit of the V1 complex of vacuolar(H+)-ATPase (V-ATPase), a multisubunit enzyme composed of a peripheral complex (V1) that hydrolyzes ATP and a membrane integral complex (V0) that translocates protons. V-ATPase is responsible for acidifying and maintaining the pH of intracellular compartments. This chain is V-type proton ATPase subunit E, found in Neurospora crassa (strain ATCC 24698 / 74-OR23-1A / CBS 708.71 / DSM 1257 / FGSC 987).